An 837-amino-acid chain; its full sequence is GRIP1-associated protein 1 (837 aa).

N-acetylalanine is present on alanine 2. A coiled-coil region spans residues 4–158 (ALSEEEFQRM…ALQERYGKEA (155 aa)). Disordered stretches follow at residues 161–180 (PSAV…PISL), 555–577 (KGKE…ERDG), 647–666 (SEMN…VSSF), and 677–702 (SSAI…LSDE). A coiled-coil region spans residues 204-637 (EQLQGLESSK…LQEILTNSKS (434 aa)). A compositionally biased stretch (polar residues) spans 648–666 (EMNSPSRTQTGDSSSVSSF). Residues serine 651, serine 662, serine 664, serine 665, serine 684, serine 686, serine 687, and serine 688 each carry the phosphoserine modification. Low complexity predominate over residues 678 to 690 (SAIPARSLSSSPQ). Coiled coils occupy residues 697–731 (AELS…LEVS) and 781–810 (DENL…KDME). Position 826 is a phosphoserine (serine 826).

As to quaternary structure, interacts with GRIP1, GRIP2 and AMPA receptors. Interacts (via C-terminus) with MAPK8/JNK1 and with MAP3K1/MEKK1; the interaction promotes MAP3K1-mediated phosphorylation of MAPK8. Interacts (via N-terminus) with RAB4A (in GTP-bound form). Interacts (via C-terminus) with STX12. Proteolytically cleaved by caspase-3. A minor C-terminal proteolytic fragment of 30 kDa is produced. Proteolytic cleavage is required for JNK signaling activation. As to expression, expressed in the central nervous system; especially in neurons.

The protein localises to the early endosome membrane. It localises to the recycling endosome membrane. Its subcellular location is the cell projection. The protein resides in the axon. It is found in the dendrite. The protein localises to the synapse. In terms of biological role, regulates the endosomal recycling back to the neuronal plasma membrane, possibly by connecting early and late recycling endosomal domains and promoting segregation of recycling endosomes from early endosomal membranes. Involved in the localization of recycling endosomes to dendritic spines, thereby playing a role in the maintenance of dendritic spine morphology. Required for the activity-induced AMPA receptor recycling to dendrite membranes and for long-term potentiation and synaptic plasticity. Its function is as follows. Functions as a scaffold protein in neurons to facilitate MAP3K1/MEKK1-mediated activation of the JNK1 kinase by phosphorylation, possibly by bringing MAP3K1/MEKK1 and JNK1 in close proximity. The chain is GRIP1-associated protein 1 (Gripap1) from Rattus norvegicus (Rat).